The following is a 469-amino-acid chain: Chromosomal replication initiator protein DnaA (469 aa).

Residues M1 to K83 are domain I, interacts with DnaA modulators. The tract at residues K83–P128 is domain II. The tract at residues D89–R131 is disordered. The interval D129–T344 is domain III, AAA+ region. 4 residues coordinate ATP: G173, G175, K176, and T177. The domain IV, binds dsDNA stretch occupies residues E345–K469.

Belongs to the DnaA family. In terms of assembly, oligomerizes as a right-handed, spiral filament on DNA at oriC.

The protein resides in the cytoplasm. Functionally, plays an essential role in the initiation and regulation of chromosomal replication. ATP-DnaA binds to the origin of replication (oriC) to initiate formation of the DNA replication initiation complex once per cell cycle. Binds the DnaA box (a 9 base pair repeat at the origin) and separates the double-stranded (ds)DNA. Forms a right-handed helical filament on oriC DNA; dsDNA binds to the exterior of the filament while single-stranded (ss)DNA is stabiized in the filament's interior. The ATP-DnaA-oriC complex binds and stabilizes one strand of the AT-rich DNA unwinding element (DUE), permitting loading of DNA polymerase. After initiation quickly degrades to an ADP-DnaA complex that is not apt for DNA replication. Binds acidic phospholipids. This chain is Chromosomal replication initiator protein DnaA, found in Treponema denticola (strain ATCC 35405 / DSM 14222 / CIP 103919 / JCM 8153 / KCTC 15104).